Reading from the N-terminus, the 278-residue chain is Tryptophan synthase alpha chain (278 aa).

Residues Glu50 and Asp61 each act as proton acceptor in the active site.

The protein belongs to the TrpA family. As to quaternary structure, tetramer of two alpha and two beta chains.

The catalysed reaction is (1S,2R)-1-C-(indol-3-yl)glycerol 3-phosphate + L-serine = D-glyceraldehyde 3-phosphate + L-tryptophan + H2O. The protein operates within amino-acid biosynthesis; L-tryptophan biosynthesis; L-tryptophan from chorismate: step 5/5. Its function is as follows. The alpha subunit is responsible for the aldol cleavage of indoleglycerol phosphate to indole and glyceraldehyde 3-phosphate. The protein is Tryptophan synthase alpha chain of Methylobacterium nodulans (strain LMG 21967 / CNCM I-2342 / ORS 2060).